We begin with the raw amino-acid sequence, 215 residues long: Eukaryotic translation initiation factor 4E-1 (215 aa).

The segment at M1 to G35 is disordered. The span at E16 to D27 shows a compositional bias: acidic residues. 2 EIF4G-binding regions span residues H40–E43 and F50–H86. MRNA-binding positions include R58–G63, K90, and W108–E109. A disulfide bond links C113 and C151. The interval H134 to Q143 is EIF4G-binding. MRNA-binding positions include R158–R163 and K203–K207.

The protein belongs to the eukaryotic initiation factor 4E family. As to quaternary structure, EIF4F is a multi-subunit complex, the composition of which varies with external and internal environmental conditions. It is composed of at least EIF4A, EIF4E and EIF4G. EIF4E is also known to interact with other partners. In higher plants two isoforms of EIF4F have been identified, named isoform EIF4F and isoform EIF(iso)4F. Isoform EIF4F has subunits p220 and p26, whereas isoform EIF(iso)4F has subunits p82 and p28. In terms of assembly, (Microbial infection) Interacts with potyvirus viral genome-linked protein (VPg); this interaction is possible in susceptible hosts but impaired in resistant plants. According to the redox status, the Cys-113-Cys-151 disulfide bridge may have a role in regulating protein function by affecting its ability to bind capped mRNA.

The protein resides in the nucleus. It localises to the cytoplasm. Functionally, component of the protein complex eIF4F, which is involved in the recognition of the mRNA cap, ATP-dependent unwinding of 5'-terminal secondary structure and recruitment of mRNA to the ribosome. Recognizes and binds the 7-methylguanosine-containing mRNA cap during an early step in the initiation of protein synthesis and facilitates ribosome binding by inducing the unwinding of the mRNAs secondary structures. Key component of recessive resistance to potyviruses and bymoviruses, including barley yellow mosaic virus and barley mild mosaic virus. (Microbial infection) Susceptibility host factor required for viral infection by recruiting viral RNAs to the host ribosomal complex via an interaction with viral genome-linked protein (VPg). This chain is Eukaryotic translation initiation factor 4E-1, found in Hordeum vulgare subsp. vulgare (Domesticated barley).